We begin with the raw amino-acid sequence, 146 residues long: Hemoglobin subunit beta (146 aa).

The 145-residue stretch at 2 to 146 folds into the Globin domain; sequence QWTAEEKQLI…VAHALARKYH (145 aa). H63 and H92 together coordinate heme b.

The protein belongs to the globin family. In terms of assembly, heterotetramer of two alpha chains and two beta chains. In terms of tissue distribution, red blood cells.

Involved in oxygen transport from the lung to the various peripheral tissues. The polypeptide is Hemoglobin subunit beta (HBB) (Apus apus (Common swift)).